A 166-amino-acid polypeptide reads, in one-letter code: Podoplanin (166 aa).

A signal peptide spans 1-22 (MWTAPVLLWVLGSVWFWDSAQG). Topologically, residues 23–135 (GAIGALEDDL…KKDGLAVVTL (113 aa)) are extracellular. O-linked (GalNAc...) threonine glycans are attached at residues Thr-34, Thr-52, Thr-55, and Thr-56. Residues 54-63 (DTTGELDKST) are compositionally biased toward basic and acidic residues. Residues 54-124 (DTTGELDKST…DNAGGETQTT (71 aa)) form a disordered region. Residue Ser-62 is glycosylated (O-linked (GalNAc...) serine). 3 O-linked (GalNAc...) threonine glycosylation sites follow: Thr-63, Thr-71, and Thr-80. The O-linked (GalNAc...) serine glycan is linked to Ser-81. Thr-83 carries O-linked (GalNAc...) threonine glycosylation. Ser-84 carries an O-linked (GalNAc...) serine glycan. Basic and acidic residues predominate over residues 84–93 (SDHDHKEHES). 7 O-linked (GalNAc...) threonine glycosylation sites follow: Thr-94, Thr-95, Thr-96, Thr-101, Thr-105, Thr-109, and Thr-110. Residues 94–103 (TTTVKAVTSH) show a composition bias toward polar residues. Residues 104 to 114 (STDKKTTHPNR) show a composition bias toward basic and acidic residues. The helical transmembrane segment at 136–156 (VGIIIGVLLAIGFIGGIIIVV) threads the bilayer. Residues 137-141 (GIIIG) form a requires for dimerization and lipid rafts association region. Topologically, residues 157 to 166 (MRKISGRFSP) are cytoplasmic. Positions 158–159 (RK) are requires for interaction with MSN and EZR.

This sequence belongs to the podoplanin family. In terms of assembly, homodimer. Interacts with CLEC1B; the interaction is independent of CLEC1B glycosylation and activates CLEC1B; the interaction is dependent of sialic acid on O-glycans. Interacts with CD9; this interaction is homophilic and attenuates platelet aggregation and pulmonary metastasis induced by PDPN. Interacts with LGALS8; the interaction is glycosylation-dependent; may participate in connection of the lymphatic endothelium to the surrounding extracellular matrix. Interacts with HSPA9. Interacts (via extracellular domain) with CD44; this interaction is required for PDPN-mediated directional migration and regulation of lamellipodia extension/stabilization during cell spreading and migration. Interacts (via cytoplasmic domain) with MSN and EZR; activates RHOA and promotes epithelial-mesenchymal transition. Interacts with CCL21; relocalized PDPN to the basolateral membrane. Extensively O-glycosylated. Contains sialic acid residues. O-glycosylation is necessary for platelet aggregation activity. Disialylated at Thr-52; sialic acid is critical for platelet-aggregating activity and for CLEC1B interaction. In terms of processing, the N-terminus is blocked. As to expression, in adult kidney, expressed on the urinary surface and foot processes of podocytes and in parietal epithelial cells of Bowman's capsule where it is localized to luminal surfaces. In lung, expressed exclusively on luminal surfaces of type I alveolar epithelial cells and pleural mesothelial cells. Not expressed in type II alveolar cells. In bone, expressed in osteocytes and osteoblasts. In spleen, liver, stomach and intestine, expressed in mesoepithelium. Also expressed in thymic epithelial cells, choroid plexus and leptomeninges.

Its subcellular location is the membrane. The protein localises to the cell projection. The protein resides in the lamellipodium membrane. It localises to the filopodium membrane. It is found in the microvillus membrane. Its subcellular location is the ruffle membrane. The protein localises to the membrane raft. The protein resides in the apical cell membrane. It localises to the basolateral cell membrane. It is found in the invadopodium. In terms of biological role, mediates effects on cell migration and adhesion through its different partners. During development plays a role in blood and lymphatic vessels separation by binding CLEC1B, triggering CLEC1B activation in platelets and leading to platelet activation and/or aggregation. Interaction with CD9, on the contrary, attenuates platelet aggregation and pulmonary metastasis induced by PDPN. Mediates effects on cell migration and adhesion through its different partners. Through MSN or EZR interaction promotes epithelial-mesenchymal transition (EMT) leading to ERZ phosphorylation and triggering RHOA activation leading to cell migration increase and invasiveness. Interaction with CD44 promotes directional cell migration in epithelial and tumor cells. In lymph nodes (LNs), controls fibroblastic reticular cells (FRCs) adhesion to the extracellular matrix (ECM) and contraction of the actomyosin by maintaining ERM proteins (EZR; MSN and RDX) and MYL9 activation through association with unknown transmembrane proteins. Engagement of CLEC1B by PDPN promotes FRCs relaxation by blocking lateral membrane interactions leading to reduction of ERM proteins (EZR; MSN and RDX) and MYL9 activation. Through binding with LGALS8 may participate in connection of the lymphatic endothelium to the surrounding extracellular matrix. In keratinocytes, induces changes in cell morphology showing an elongated shape, numerous membrane protrusions, major reorganization of the actin cytoskeleton, increased motility and decreased cell adhesion. Controls invadopodia stability and maturation leading to efficient degradation of the extracellular matrix (ECM) in tumor cells through modulation of RHOC activity in order to activate ROCK1/ROCK2 and LIMK1/LIMK2 and inactivation of CFL1. Required for normal lung cell proliferation and alveolus formation at birth. Does not function as a water channel or as a regulator of aquaporin-type water channels. Does not have any effect on folic acid or amino acid transport. The polypeptide is Podoplanin (Rattus norvegicus (Rat)).